Reading from the N-terminus, the 211-residue chain is Uracil phosphoribosyltransferase (211 aa).

30–34 (KGLVR) contacts GTP. Residues R79, R104, and 133–141 (DPMLATGTT) each bind 5-phospho-alpha-D-ribose 1-diphosphate. Residues I197 and 202–204 (GDA) each bind uracil. D203 serves as a coordination point for 5-phospho-alpha-D-ribose 1-diphosphate.

The protein belongs to the UPRTase family. The cofactor is Mg(2+).

It catalyses the reaction UMP + diphosphate = 5-phospho-alpha-D-ribose 1-diphosphate + uracil. It functions in the pathway pyrimidine metabolism; UMP biosynthesis via salvage pathway; UMP from uracil: step 1/1. With respect to regulation, allosterically activated by GTP. Its function is as follows. Catalyzes the conversion of uracil and 5-phospho-alpha-D-ribose 1-diphosphate (PRPP) to UMP and diphosphate. This is Uracil phosphoribosyltransferase from Pyrobaculum arsenaticum (strain DSM 13514 / JCM 11321 / PZ6).